We begin with the raw amino-acid sequence, 461 residues long: Flavin-containing monooxygenase FMO GS-OX-like 8 (461 aa).

20 to 25 (GAGPSG) lines the FAD pocket. 220 to 225 (GCSMSG) is a binding site for NADP(+).

Belongs to the FMO family. Interacts with EER5. The cofactor is FAD.

Functionally, catalyzes the conversion of methylthioalkyl glucosinolates of any chain length into methylsulfinylalkyl glucosinolates. The polypeptide is Flavin-containing monooxygenase FMO GS-OX-like 8 (Arabidopsis thaliana (Mouse-ear cress)).